A 208-amino-acid polypeptide reads, in one-letter code: uncharacterized protein (208 aa).

2 disordered regions span residues 74-117 (FEYK…RDSP) and 181-208 (ESKL…RKFK). Residues 184–208 (LGSSEDSGTDRFSSNTSGSSGRKFK) show a composition bias toward polar residues.

This is an uncharacterized protein from Mus musculus (Mouse).